The primary structure comprises 173 residues: Putative metal-dependent hydrolase BcerKBAB4_2443 (173 aa).

Zn(2+) contacts are provided by His-65, His-156, and His-160.

This sequence belongs to the metal hydrolase YfiT family. In terms of assembly, homodimer. The cofactor is Zn(2+).

It is found in the cytoplasm. In terms of biological role, possible metal-dependent hydrolase. The sequence is that of Putative metal-dependent hydrolase BcerKBAB4_2443 from Bacillus mycoides (strain KBAB4) (Bacillus weihenstephanensis).